The sequence spans 88 residues: Co-chaperonin GroES (88 aa).

Belongs to the GroES chaperonin family. As to quaternary structure, heptamer of 7 subunits arranged in a ring. Interacts with the chaperonin GroEL.

It localises to the cytoplasm. Together with the chaperonin GroEL, plays an essential role in assisting protein folding. The GroEL-GroES system forms a nano-cage that allows encapsulation of the non-native substrate proteins and provides a physical environment optimized to promote and accelerate protein folding. GroES binds to the apical surface of the GroEL ring, thereby capping the opening of the GroEL channel. This chain is Co-chaperonin GroES, found in Thermodesulfovibrio yellowstonii (strain ATCC 51303 / DSM 11347 / YP87).